A 278-amino-acid polypeptide reads, in one-letter code: UPF0276 protein Swit_4400 (278 aa).

It belongs to the UPF0276 family.

This chain is UPF0276 protein Swit_4400, found in Rhizorhabdus wittichii (strain DSM 6014 / CCUG 31198 / JCM 15750 / NBRC 105917 / EY 4224 / RW1) (Sphingomonas wittichii).